The sequence spans 140 residues: HTH-type transcriptional regulator LysM (140 aa).

An HTH asnC-type domain is found at 4 to 67 (VDESDLKILE…ELENEIRAIV (64 aa)). Residues 23–42 (YTSIAKELKISEAAVRKRIE) constitute a DNA-binding region (H-T-H motif).

In terms of assembly, homotetramer.

The protein localises to the cytoplasm. The protein operates within amino-acid biosynthesis; L-lysine biosynthesis via AAA pathway [regulation]. Its function is as follows. In the absence or at low concentrations of lysine, activates the biosynthesis of this amino acid via the alpha-aminoadipate (AAA) pathway. This chain is HTH-type transcriptional regulator LysM (lysM), found in Sulfurisphaera tokodaii (strain DSM 16993 / JCM 10545 / NBRC 100140 / 7) (Sulfolobus tokodaii).